The chain runs to 360 residues: Phospho-N-acetylmuramoyl-pentapeptide-transferase (360 aa).

The next 10 helical transmembrane spans lie at 26 to 46 (AILGLLTALVFSLWWGPILIK), 73 to 93 (TMGGILILAGIFISVLLWGDL), 97 to 117 (YVLVTLFVLASFGVIGFIDDY), 135 to 155 (ALQSIAALVVAVYLYSSSTMV), 168 to 188 (IMPQLGFMFILLAYFTIVGAS), 199 to 219 (GLAIMPTVMVAAAFALIAYLS), 236 to 256 (AGELVIVCTAMVGAGLGFLWF), 263 to 283 (VFMGDVGSLALGAALGVIAIL), 288 to 308 (ILLVIMGGVFVMETVSVILQV), and 338 to 358 (VIVRFWIISLFLVLLGLATLK).

The protein belongs to the glycosyltransferase 4 family. MraY subfamily. Mg(2+) is required as a cofactor.

The protein localises to the cell inner membrane. The catalysed reaction is UDP-N-acetyl-alpha-D-muramoyl-L-alanyl-gamma-D-glutamyl-meso-2,6-diaminopimeloyl-D-alanyl-D-alanine + di-trans,octa-cis-undecaprenyl phosphate = di-trans,octa-cis-undecaprenyl diphospho-N-acetyl-alpha-D-muramoyl-L-alanyl-D-glutamyl-meso-2,6-diaminopimeloyl-D-alanyl-D-alanine + UMP. It participates in cell wall biogenesis; peptidoglycan biosynthesis. Its function is as follows. Catalyzes the initial step of the lipid cycle reactions in the biosynthesis of the cell wall peptidoglycan: transfers peptidoglycan precursor phospho-MurNAc-pentapeptide from UDP-MurNAc-pentapeptide onto the lipid carrier undecaprenyl phosphate, yielding undecaprenyl-pyrophosphoryl-MurNAc-pentapeptide, known as lipid I. The sequence is that of Phospho-N-acetylmuramoyl-pentapeptide-transferase from Shewanella frigidimarina (strain NCIMB 400).